A 685-amino-acid polypeptide reads, in one-letter code: DNA ligase (685 aa).

NAD(+) contacts are provided by residues 47–51 (DSEYD), 96–97 (SL), and Glu-125. The active-site N6-AMP-lysine intermediate is Lys-127. Residues Arg-148, Glu-185, Lys-304, and Lys-328 each coordinate NAD(+). Residues Cys-422, Cys-425, Cys-440, and Cys-446 each contribute to the Zn(2+) site. In terms of domain architecture, BRCT spans 605–685 (ADAQPLKGQT…ALLALFAANR (81 aa)).

Belongs to the NAD-dependent DNA ligase family. LigA subfamily. Mg(2+) is required as a cofactor. Requires Mn(2+) as cofactor.

The catalysed reaction is NAD(+) + (deoxyribonucleotide)n-3'-hydroxyl + 5'-phospho-(deoxyribonucleotide)m = (deoxyribonucleotide)n+m + AMP + beta-nicotinamide D-nucleotide.. In terms of biological role, DNA ligase that catalyzes the formation of phosphodiester linkages between 5'-phosphoryl and 3'-hydroxyl groups in double-stranded DNA using NAD as a coenzyme and as the energy source for the reaction. It is essential for DNA replication and repair of damaged DNA. The protein is DNA ligase of Shewanella sp. (strain W3-18-1).